Reading from the N-terminus, the 381-residue chain is CD209 antigen (381 aa).

The Cytoplasmic segment spans residues 1–37 (MSDSKEPSVQQLGLLEEEQLRGLGFRQTRGYKSLAGC). Short sequence motifs (endocytosis signal) lie at residues 14-15 (LL), 16-18 (EEE), and 31-34 (YKSL). Residues 38-58 (LGHGXLVLQLLSFTXLAGLLI) form a helical; Signal-anchor for type II membrane protein membrane-spanning segment. At 59–381 (QVSKFPSSIS…APATPNPPPA (323 aa)) the chain is on the extracellular side. Asparagine 80 carries N-linked (GlcNAc...) asparagine glycosylation. Repeat copies occupy residues 96–118 (KLQE…PEKS), 119–141 (QQQE…PEKS), 142–164 (TQQE…PEQS), 165–187 (KLQE…PEKS), 188–210 (KQQE…PEKS), and 211–234 (KQQE…RPCP). Residues 96–303 (KLQEIYQELT…GLSDVNQEGT (208 aa)) are 6 X approximate tandem repeats. Disulfide bonds link cysteine 233–cysteine 244, cysteine 261–cysteine 354, and cysteine 333–cysteine 346. Positions 240–355 (FQGNCYFMSN…CNHAKFWICK (116 aa)) constitute a C-type lectin domain. Ca(2+) is bound by residues glutamate 324, asparagine 326, isoleucine 328, glutamate 331, asparagine 342, and aspartate 343.

In terms of assembly, homotetramer. Interacts with C1QBP; the interaction is indicative for a C1q:C1QBP:CD209 signaling complex. Interacts with ICAM2 and ICAM3 by binding to mannose-like carbohydrates. Interacts (via C-type lectin domain) with CEACAM1 (via Lewis X moieties); this interaction is regulated by the glycosylation pattern of CEACAM1 on cell types and regulates contact between dendritic cells and neutrophils.

It is found in the membrane. In terms of biological role, pathogen-recognition receptor expressed on the surface of immature dendritic cells (DCs) and involved in initiation of primary immune response. Thought to mediate the endocytosis of pathogens which are subsequently degraded in lysosomal compartments. The receptor returns to the cell membrane surface and the pathogen-derived antigens are presented to resting T-cells via MHC class II proteins to initiate the adaptive immune response. Probably recognizes in a calcium-dependent manner high mannose N-linked oligosaccharides in a variety of pathogen antigens. Functionally, on DCs it is a high affinity receptor for ICAM2 and ICAM3 by binding to mannose-like carbohydrates. May act as a DC rolling receptor that mediates transendothelial migration of DC presursors from blood to tissues by binding endothelial ICAM2. Seems to regulate DC-induced T-cell proliferation by binding to ICAM3 on T-cells in the immunological synapse formed between DC and T-cells. The polypeptide is CD209 antigen (CD209) (Symphalangus syndactylus (Siamang)).